The primary structure comprises 325 residues: Apoptosis-enhancing nuclease (325 aa).

The Nucleolar localization signal motif lies at 27 to 35 (RKRHKRRSR). A disordered region spans residues 53-105 (LSMPPEPGSSPLPTPFGAVTATEDASSGKQCPRAGSGGAPCSRRPAPGKASGP). Residues 56-66 (PPEPGSSPLPT) are compositionally biased toward pro residues. In terms of domain architecture, Exonuclease spans 110–266 (CVAIDCEMVG…EDATTAMELY (157 aa)). A Nuclear localization signal motif is present at residues 165–188 (RQHMCKAIPFQVAQKEILKLLKGK). The interval 281 to 325 (LWTCPEDREPDSSTDMEQYMEDQYWPDDLAHGSRGGAREAQDRRN) is disordered. A compositionally biased stretch (basic and acidic residues) spans 308–325 (DLAHGSRGGAREAQDRRN).

It localises to the nucleus. It is found in the nucleolus. Its function is as follows. Exonuclease with activity against single- and double-stranded DNA and RNA. Mediates p53-induced apoptosis. When induced by p53 following DNA damage, digests double-stranded DNA to form single-stranded DNA and amplifies DNA damage signals, leading to enhancement of apoptosis. The chain is Apoptosis-enhancing nuclease (AEN) from Pongo abelii (Sumatran orangutan).